The chain runs to 390 residues: Chorismate synthase 2 (390 aa).

R39 and R45 together coordinate NADP(+). FMN contacts are provided by residues 132–134 (RSS), 253–254 (NA), G298, 313–317 (KPIPT), and R339.

Belongs to the chorismate synthase family. In terms of assembly, homotetramer. The cofactor is FMNH2.

The enzyme catalyses 5-O-(1-carboxyvinyl)-3-phosphoshikimate = chorismate + phosphate. It participates in metabolic intermediate biosynthesis; chorismate biosynthesis; chorismate from D-erythrose 4-phosphate and phosphoenolpyruvate: step 7/7. Catalyzes the anti-1,4-elimination of the C-3 phosphate and the C-6 proR hydrogen from 5-enolpyruvylshikimate-3-phosphate (EPSP) to yield chorismate, which is the branch point compound that serves as the starting substrate for the three terminal pathways of aromatic amino acid biosynthesis. This reaction introduces a second double bond into the aromatic ring system. The sequence is that of Chorismate synthase 2 from Bacillus thuringiensis subsp. konkukian (strain 97-27).